A 365-amino-acid polypeptide reads, in one-letter code: Endophilin-B1 (365 aa).

Methionine 1 is modified (N-acetylmethionine). Residues 1 to 30 form a membrane-binding amphipathic helix region; the sequence is MNIMDFNVKKLAADAGTFLSRAVQFTEEKL. The required for membrane binding stretch occupies residues 1–37; it reads MNIMDFNVKKLAADAGTFLSRAVQFTEEKLGQAEKTE. The BAR domain maps to 27–261; the sequence is EEKLGQAEKT…LGSFPSNYLS (235 aa). The residue at position 145 (threonine 145) is a Phosphothreonine; by CDK5. Residues 155–186 are a coiled coil; that stretch reads YKTIAKERKLLQNKRLDLDAAKTRLKKAKAAE. The SH3 domain maps to 305–365; it reads SNNRKARVLY…VPITYLELLN (61 aa).

The protein belongs to the endophilin family. As to quaternary structure, homodimer, and heterodimer with SH3GLB2. Binds BAX; induction of apoptosis augments BAX binding. Binds DNM1, HTT, AMPH, BIN1 and ARFGAP1. Interacts with UVRAG; UVRAG bridges the interaction to BECN1 indicative for an association with the PI3K complex II (PI3KC3-C2). Isoform 3 interacts with PPP1CC; this interaction leads to the inhibition of phosphatase activity. Phosphorylated at Thr-145 by CDK5; this phosphorylation is required for autophagy induction in starved neurons and facilitates homodimerization. Isoform 1 is widely expressed. Isoform 2 is brain-specific. Isoform 3 is predominantly expressed in testis, but it is also detected in liver and, at much lower levels, in skin, stomach and ovary.

It localises to the cytoplasm. Its subcellular location is the golgi apparatus membrane. The protein localises to the mitochondrion outer membrane. It is found in the cytoplasmic vesicle. The protein resides in the autophagosome membrane. It localises to the midbody. Its function is as follows. May be required for normal outer mitochondrial membrane dynamics. Required for coatomer-mediated retrograde transport in certain cells. May recruit other proteins to membranes with high curvature. May promote membrane fusion. Involved in activation of caspase-dependent apoptosis by promoting BAX/BAK1 activation. Isoform 1 acts proapoptotic in fibroblasts. Involved in caspase-independent apoptosis during nutrition starvation and involved in the regulation of autophagy. Activates lipid kinase activity of PIK3C3 during autophagy probably by associating with the PI3K complex II (PI3KC3-C2). Associated with PI3KC3-C2 during autophagy may regulate the trafficking of ATG9A from the Golgi complex to the peripheral cytoplasm for the formation of autophagosomes by inducing Golgi membrane tubulation and fragmentation. Involved in regulation of degradative endocytic trafficking and cytokinesis, probably in the context of PI3KC3-C2. Isoform 2 acts antiapoptotic in neuronal cells; involved in maintenance of mitochondrial morphology and promotes neuronal viability. The sequence is that of Endophilin-B1 (Sh3glb1) from Mus musculus (Mouse).